Consider the following 121-residue polypeptide: Large ribosomal subunit protein uL22 (121 aa).

It belongs to the universal ribosomal protein uL22 family. In terms of assembly, part of the 50S ribosomal subunit.

In terms of biological role, this protein binds specifically to 23S rRNA; its binding is stimulated by other ribosomal proteins, e.g. L4, L17, and L20. It is important during the early stages of 50S assembly. It makes multiple contacts with different domains of the 23S rRNA in the assembled 50S subunit and ribosome. The globular domain of the protein is located near the polypeptide exit tunnel on the outside of the subunit, while an extended beta-hairpin is found that lines the wall of the exit tunnel in the center of the 70S ribosome. This is Large ribosomal subunit protein uL22 from Pseudarthrobacter chlorophenolicus (strain ATCC 700700 / DSM 12829 / CIP 107037 / JCM 12360 / KCTC 9906 / NCIMB 13794 / A6) (Arthrobacter chlorophenolicus).